The chain runs to 438 residues: Serine hydroxymethyltransferase (438 aa).

(6S)-5,6,7,8-tetrahydrofolate contacts are provided by residues Leu-119 and 123 to 125 (GHL). At Lys-228 the chain carries N6-(pyridoxal phosphate)lysine. 370–372 (SPF) contacts (6S)-5,6,7,8-tetrahydrofolate.

Belongs to the SHMT family. Homodimer. Requires pyridoxal 5'-phosphate as cofactor.

It localises to the cytoplasm. It catalyses the reaction (6R)-5,10-methylene-5,6,7,8-tetrahydrofolate + glycine + H2O = (6S)-5,6,7,8-tetrahydrofolate + L-serine. It participates in one-carbon metabolism; tetrahydrofolate interconversion. It functions in the pathway amino-acid biosynthesis; glycine biosynthesis; glycine from L-serine: step 1/1. Catalyzes the reversible interconversion of serine and glycine with tetrahydrofolate (THF) serving as the one-carbon carrier. This reaction serves as the major source of one-carbon groups required for the biosynthesis of purines, thymidylate, methionine, and other important biomolecules. Also exhibits THF-independent aldolase activity toward beta-hydroxyamino acids, producing glycine and aldehydes, via a retro-aldol mechanism. This chain is Serine hydroxymethyltransferase, found in Pelodictyon phaeoclathratiforme (strain DSM 5477 / BU-1).